The sequence spans 226 residues: Transmembrane protein 98 (226 aa).

Over methionine 1–threonine 3 the chain is Cytoplasmic. Positions methionine 1 to serine 88 are required for interaction with MYRF. The helical transmembrane segment at valine 4–valine 24 threads the bilayer. The Extracellular portion of the chain corresponds to valine 25–isoleucine 226. Positions serine 207 to isoleucine 226 are disordered.

It belongs to the TMEM98 family. As to quaternary structure, interacts (via N-terminal region) with MYRF; the interaction inhibits MYRF self-cleavage. In terms of tissue distribution, expressed in differentiated oligodendrocytes in early postanatal central nervous system tissues. Expressed by CD4(+) T cells, the expression increases upon activation (at protein level).

It localises to the endoplasmic reticulum membrane. Its subcellular location is the cell membrane. It is found in the secreted. The protein localises to the extracellular exosome. Functionally, functions as a negative regulator of MYRF in oligodendrocyte differentiation and myelination. Interacts with the C-terminal of MYRF inhibiting MYRF self-cleavage and N-fragment nuclear translocation. The secreted form promotes differentiation of T helper 1 cells (Th1). This Mus musculus (Mouse) protein is Transmembrane protein 98 (Tmem98).